The chain runs to 124 residues: Large ribosomal subunit protein eL31 (124 aa).

Tyrosine 102 is modified (phosphotyrosine).

This sequence belongs to the eukaryotic ribosomal protein eL31 family.

The polypeptide is Large ribosomal subunit protein eL31 (RpL31) (Drosophila melanogaster (Fruit fly)).